The primary structure comprises 93 residues: Cell division protein FtsB (93 aa).

The Cytoplasmic portion of the chain corresponds to 1–3; it reads MRL. A helical membrane pass occupies residues 4-21; it reads FILSLFALLVMFQYDFWF. At 22 to 93 the chain is on the periplasmic side; sequence GKNGYLDYQD…FYRIVKNKNR (72 aa). Residues 28–76 are a coiled coil; it reads DYQDIKAEIIQRKQENKKLSQRNQTIFAEIQDLKNGIEAIEERARMEHE.

The protein belongs to the FtsB family. As to quaternary structure, part of a complex composed of FtsB, FtsL and FtsQ.

The protein localises to the cell inner membrane. Its function is as follows. Essential cell division protein. May link together the upstream cell division proteins, which are predominantly cytoplasmic, with the downstream cell division proteins, which are predominantly periplasmic. This Histophilus somni (strain 129Pt) (Haemophilus somnus) protein is Cell division protein FtsB.